Reading from the N-terminus, the 695-residue chain is DNA ligase (695 aa).

NAD(+)-binding positions include 39–43, 88–89, and Glu-124; these read DAEYD and SL. The N6-AMP-lysine intermediate role is filled by Lys-126. Residues Arg-147, Glu-183, Lys-299, and Lys-323 each contribute to the NAD(+) site. Residues Cys-419, Cys-422, Cys-437, and Cys-443 each coordinate Zn(2+). One can recognise a BRCT domain in the interval 612–695; sequence PAQGHLSGKT…ELAGIGPVGP (84 aa).

Belongs to the NAD-dependent DNA ligase family. LigA subfamily. Requires Mg(2+) as cofactor. Mn(2+) serves as cofactor.

The catalysed reaction is NAD(+) + (deoxyribonucleotide)n-3'-hydroxyl + 5'-phospho-(deoxyribonucleotide)m = (deoxyribonucleotide)n+m + AMP + beta-nicotinamide D-nucleotide.. Functionally, DNA ligase that catalyzes the formation of phosphodiester linkages between 5'-phosphoryl and 3'-hydroxyl groups in double-stranded DNA using NAD as a coenzyme and as the energy source for the reaction. It is essential for DNA replication and repair of damaged DNA. This chain is DNA ligase, found in Gluconacetobacter diazotrophicus (strain ATCC 49037 / DSM 5601 / CCUG 37298 / CIP 103539 / LMG 7603 / PAl5).